A 274-amino-acid polypeptide reads, in one-letter code: 2,3,4,5-tetrahydropyridine-2,6-dicarboxylate N-succinyltransferase (274 aa).

The protein belongs to the transferase hexapeptide repeat family.

It is found in the cytoplasm. It carries out the reaction (S)-2,3,4,5-tetrahydrodipicolinate + succinyl-CoA + H2O = (S)-2-succinylamino-6-oxoheptanedioate + CoA. It functions in the pathway amino-acid biosynthesis; L-lysine biosynthesis via DAP pathway; LL-2,6-diaminopimelate from (S)-tetrahydrodipicolinate (succinylase route): step 1/3. The sequence is that of 2,3,4,5-tetrahydropyridine-2,6-dicarboxylate N-succinyltransferase from Salmonella heidelberg (strain SL476).